The sequence spans 257 residues: NAD-capped RNA hydrolase NudC (257 aa).

Arg69 contacts substrate. Positions 98 and 101 each coordinate Zn(2+). Substrate is bound at residue Glu111. Residues Cys116 and Cys119 each contribute to the Zn(2+) site. Position 124 (Tyr124) interacts with substrate. Residues 125 to 248 (PQIAPCIIVA…TVARRLIEDT (124 aa)) form the Nudix hydrolase domain. A divalent metal cation contacts are provided by Ala158, Glu174, and Glu178. Positions 159-180 (GFVEVGETLEQAVAREVMEESG) match the Nudix box motif. Substrate is bound at residue 192-199 (QPWPFPQS). Residue Glu219 participates in a divalent metal cation binding. Substrate is bound at residue Ala241.

It belongs to the Nudix hydrolase family. NudC subfamily. Homodimer. It depends on Mg(2+) as a cofactor. The cofactor is Mn(2+). Requires Zn(2+) as cofactor.

It carries out the reaction a 5'-end NAD(+)-phospho-ribonucleoside in mRNA + H2O = a 5'-end phospho-adenosine-phospho-ribonucleoside in mRNA + beta-nicotinamide D-ribonucleotide + 2 H(+). The enzyme catalyses NAD(+) + H2O = beta-nicotinamide D-ribonucleotide + AMP + 2 H(+). The catalysed reaction is NADH + H2O = reduced beta-nicotinamide D-ribonucleotide + AMP + 2 H(+). MRNA decapping enzyme that specifically removes the nicotinamide adenine dinucleotide (NAD) cap from a subset of mRNAs by hydrolyzing the diphosphate linkage to produce nicotinamide mononucleotide (NMN) and 5' monophosphate mRNA. The NAD-cap is present at the 5'-end of some mRNAs and stabilizes RNA against 5'-processing. Has preference for mRNAs with a 5'-end purine. Catalyzes the hydrolysis of a broad range of dinucleotide pyrophosphates. The sequence is that of NAD-capped RNA hydrolase NudC from Salmonella agona (strain SL483).